The primary structure comprises 244 residues: Phosphoadenosine 5'-phosphosulfate reductase (244 aa).

Residue Cys-239 is the Nucleophile; cysteine thiosulfonate intermediate of the active site.

The protein belongs to the PAPS reductase family. CysH subfamily.

The protein localises to the cytoplasm. It catalyses the reaction [thioredoxin]-disulfide + sulfite + adenosine 3',5'-bisphosphate + 2 H(+) = [thioredoxin]-dithiol + 3'-phosphoadenylyl sulfate. It participates in sulfur metabolism; hydrogen sulfide biosynthesis; sulfite from sulfate: step 3/3. In terms of biological role, catalyzes the formation of sulfite from phosphoadenosine 5'-phosphosulfate (PAPS) using thioredoxin as an electron donor. This Salmonella choleraesuis (strain SC-B67) protein is Phosphoadenosine 5'-phosphosulfate reductase.